Here is a 346-residue protein sequence, read N- to C-terminus: Dihydroorotase (346 aa).

Zn(2+) contacts are provided by histidine 13 and histidine 15. Substrate-binding positions include 15-17 (HLR) and asparagine 41. Positions 99, 136, and 174 each coordinate Zn(2+). Lysine 99 bears the N6-carboxylysine mark. Histidine 136 provides a ligand contact to substrate. Leucine 219 serves as a coordination point for substrate. Aspartate 247 is a binding site for Zn(2+). Residue aspartate 247 is part of the active site. Residues histidine 251 and alanine 263 each coordinate substrate.

This sequence belongs to the metallo-dependent hydrolases superfamily. DHOase family. Class II DHOase subfamily. Homodimer. Zn(2+) is required as a cofactor.

It catalyses the reaction (S)-dihydroorotate + H2O = N-carbamoyl-L-aspartate + H(+). The protein operates within pyrimidine metabolism; UMP biosynthesis via de novo pathway; (S)-dihydroorotate from bicarbonate: step 3/3. In terms of biological role, catalyzes the reversible cyclization of carbamoyl aspartate to dihydroorotate. This Rhizobium leguminosarum bv. trifolii (strain WSM2304) protein is Dihydroorotase.